The following is a 329-amino-acid chain: BTB/POZ domain-containing adapter for CUL3-mediated RhoA degradation protein 1 (329 aa).

Low complexity predominate over residues 1–15; that stretch reads MSAEASGPAAAEAPS. The disordered stretch occupies residues 1-21; that stretch reads MSAEASGPAAAEAPSLEVAKP. Residues 41–109 enclose the BTB domain; it reads KYVKLNVGGS…LRDGSVPLPE (69 aa). The disordered stretch occupies residues 280–302; the sequence is LEATGGAAGGGGASRGEDEDNRE.

It belongs to the BACURD family. Homotetramer; forms a two-fold symmetric tetramer in solution. Interacts with CUL3; interaction is direct and forms a 5:5 heterodecamer. Component of the BCR(KCTD13) E3 ubiquitin ligase complex, at least composed of CUL3, KCTD13/BACURD1 and RBX1. Interacts with RHOA; with a preference for RhoA-GDP. Interacts with POLD2 and PCNA. Interacts with SPRTN.

It is found in the nucleus. The protein operates within protein modification; protein ubiquitination. Substrate-specific adapter of a BCR (BTB-CUL3-RBX1) E3 ubiquitin-protein ligase complex required for synaptic transmission. The BCR(KCTD13) E3 ubiquitin ligase complex mediates the ubiquitination of RHOA, leading to its degradation by the proteasome, thereby regulating the actin cytoskeleton and promoting synaptic transmission. The protein is BTB/POZ domain-containing adapter for CUL3-mediated RhoA degradation protein 1 (KCTD13) of Bos taurus (Bovine).